The following is a 673-amino-acid chain: MSEFIRKRIRELVDLINYHDYKYYVEDNPEISDYEYDMLYRELVELEKQYPEYVFPDSPTQRVGGKVKEGFKEVVHRVPLLSLSNVFNEGELYDFDRRLKELIGTSNFDYVVEYKIDGLSVALEYENGLFIRGATRGDGNVGEDVTENLKTIRSIPLRLKEDISIVVRGEVFMPKDEFIKLNQEREENEEPLFANPRNAAAGSLRQLDPKITAQRKLDIFVFNIQWCEKELETHAQALEFLKHLGFKVSPDYVVCRDIKEAFEAIKKIEEKRDLLPFEIDGAVVKLNQLRLRDVAGETAKSPRWAVAYKFPPEKKETKLLDIEVNVGRTGILTPTAILEPVRISGSVVSRATLHNMDYIRQKDIRIGDTVIVQKAAEIIPEVVEVVFSKRTGQERIFEMPKKCPVCGADVIKFEDEVAYRCTGVECPAKSYRLILHFVSRDAMDIAGMGEMVVKTLFEKGLIKTPADIYYLKFEDLVNLERFGVKSTNNLLKAIQASKNRPLDRLIYALGIRHIGQKAAKTLAEHISSIDDLFTITEEQLLCLPDFGEKMAKSVVTFFRQEQTRHLIERLKAAGVNTVSEKKAKSDILKGYTFVLTGALSKYSRNEAKEILESLGAKVTESVSKKTTAVIVGQDPGSKFTKAQQLGVKILNEEDFEKLVKALSREEAEKILME.

Residues aspartate 33–aspartate 37, serine 82–leucine 83, and glutamate 113 each bind NAD(+). Lysine 115 serves as the catalytic N6-AMP-lysine intermediate. 4 residues coordinate NAD(+): arginine 136, glutamate 170, lysine 285, and lysine 309. The Zn(2+) site is built by cysteine 403, cysteine 406, cysteine 421, and cysteine 426. One can recognise a BRCT domain in the interval alanine 583–methionine 672.

It belongs to the NAD-dependent DNA ligase family. LigA subfamily. Requires Mg(2+) as cofactor. Mn(2+) is required as a cofactor.

It carries out the reaction NAD(+) + (deoxyribonucleotide)n-3'-hydroxyl + 5'-phospho-(deoxyribonucleotide)m = (deoxyribonucleotide)n+m + AMP + beta-nicotinamide D-nucleotide.. Its function is as follows. DNA ligase that catalyzes the formation of phosphodiester linkages between 5'-phosphoryl and 3'-hydroxyl groups in double-stranded DNA using NAD as a coenzyme and as the energy source for the reaction. It is essential for DNA replication and repair of damaged DNA. This Caldicellulosiruptor bescii (strain ATCC BAA-1888 / DSM 6725 / KCTC 15123 / Z-1320) (Anaerocellum thermophilum) protein is DNA ligase.